Consider the following 215-residue polypeptide: MTKNWKVSSQDVFSQGPVVPVLVIKDVKHAVPLAKALIAGGIRVLEVTLRTEAALDVIKAIATEVPDAIIGAGTVTNAKQLAEVEAAGAMFAISPGMTSDLLDAGNKGGIALIPGISSISELMRGIDFGYTHFKFFPAEASGGVKAIKAIGGPFPDIAFCPTGGISPTNYLEYLSLPNVRCAGGSWLAPDDAVEAGDWDRITELAKQAVAGAAGI.

Glu-46 acts as the Proton acceptor in catalysis. Arg-50, Thr-74, and Lys-134 together coordinate pyruvate. The active-site Schiff-base intermediate with substrate is Lys-134.

Belongs to the KHG/KDPG aldolase family. As to quaternary structure, homotrimer.

It carries out the reaction 2-dehydro-3-deoxy-6-phospho-D-gluconate = D-glyceraldehyde 3-phosphate + pyruvate. It functions in the pathway carbohydrate acid metabolism; 2-dehydro-3-deoxy-D-gluconate degradation; D-glyceraldehyde 3-phosphate and pyruvate from 2-dehydro-3-deoxy-D-gluconate: step 2/2. Functionally, involved in the degradation of glucose via the Entner-Doudoroff pathway. Catalyzes the reversible, stereospecific retro-aldol cleavage of 2-keto-3-deoxy-6-phosphogluconate (KDPG) to pyruvate and D-glyceraldehyde-3-phosphate. Involved in the degradation of 3,6-anhydro-L-galactose (L-AnG), which is the major monomeric sugar of red macroalgae. The cleavage of KDPG to glyceraldehyde 3-phosphate and pyruvate is the sixth step of this pathway. This is 2-dehydro-3-deoxy-phosphogluconate aldolase from Pseudoalteromonas atlantica (strain T6c / ATCC BAA-1087).